The chain runs to 281 residues: MITSSDVSTIRAQVRSWRSQGESVAFVPTMGNLHQGHITLVKEAKLRAKHVVVSIFVNPMQFGQHEDLDAYPRTLAADSQALIDAGAALLFTPTAQTIYPKGLQQQTFVEVPEIGDVFCGASRPGHFRGVATIVCKLFNIVQPDIALFGRKDFQQLLVIKHMVNDLSLGIDIIGIDTIREASGLAMSSRNGYLTPEQKHTAATIKRALDLIANAVRQGEAIDKATAEGEAMIVQAGFKLDYLSVCNADNLHPAQADDKQLVILVAAYLGTTRLIDNLCFSR.

An ATP-binding site is contributed by 30–37 (MGNLHQGH). The Proton donor role is filled by H37. Residue Q61 participates in (R)-pantoate binding. Q61 serves as a coordination point for beta-alanine. An ATP-binding site is contributed by 149–152 (GRKD). Q155 contributes to the (R)-pantoate binding site. ATP is bound by residues I178 and 186–189 (MSSR).

Belongs to the pantothenate synthetase family. As to quaternary structure, homodimer.

It localises to the cytoplasm. It carries out the reaction (R)-pantoate + beta-alanine + ATP = (R)-pantothenate + AMP + diphosphate + H(+). The protein operates within cofactor biosynthesis; (R)-pantothenate biosynthesis; (R)-pantothenate from (R)-pantoate and beta-alanine: step 1/1. In terms of biological role, catalyzes the condensation of pantoate with beta-alanine in an ATP-dependent reaction via a pantoyl-adenylate intermediate. The protein is Pantothenate synthetase of Shewanella denitrificans (strain OS217 / ATCC BAA-1090 / DSM 15013).